The primary structure comprises 161 residues: SsrA-binding protein (161 aa).

It belongs to the SmpB family.

Its subcellular location is the cytoplasm. Its function is as follows. Required for rescue of stalled ribosomes mediated by trans-translation. Binds to transfer-messenger RNA (tmRNA), required for stable association of tmRNA with ribosomes. tmRNA and SmpB together mimic tRNA shape, replacing the anticodon stem-loop with SmpB. tmRNA is encoded by the ssrA gene; the 2 termini fold to resemble tRNA(Ala) and it encodes a 'tag peptide', a short internal open reading frame. During trans-translation Ala-aminoacylated tmRNA acts like a tRNA, entering the A-site of stalled ribosomes, displacing the stalled mRNA. The ribosome then switches to translate the ORF on the tmRNA; the nascent peptide is terminated with the 'tag peptide' encoded by the tmRNA and targeted for degradation. The ribosome is freed to recommence translation, which seems to be the essential function of trans-translation. This chain is SsrA-binding protein, found in Vibrio vulnificus (strain YJ016).